Consider the following 884-residue polypeptide: Protein P (884 aa).

A terminal protein domain (TP) region spans residues 1–184; the sequence is MHPFSRLFRN…GKPYSWEHRQ (184 aa). Residues 185–387 form a spacer region; the sequence is LVQHNGQQHK…YCIHHIVSSL (203 aa). Disordered regions lie at residues 218 to 241 and 299 to 345; these read PSEPVSVSTRNLSNNISDKSQKST and RNSG…DFSS. Composition is skewed to polar residues over residues 222-241 and 323-332; these read VSVSTRNLSNNISDKSQKST and YSSNSTSQRY. A polymerase/reverse transcriptase domain (RT) region spans residues 388 to 729; it reads DDWGPCTVTG…YEELWPVVRQ (342 aa). Residues 398–639 form the Reverse transcriptase domain; it reads DVTIKSPRTP…NHLHFMGYVI (242 aa). Residues D470, D590, and D591 each coordinate Mg(2+).

The protein belongs to the hepadnaviridae P protein family.

It catalyses the reaction DNA(n) + a 2'-deoxyribonucleoside 5'-triphosphate = DNA(n+1) + diphosphate. The catalysed reaction is Endonucleolytic cleavage to 5'-phosphomonoester.. Its activity is regulated as follows. Activated by host HSP70 and HSP40 in vitro to be able to bind the epsilon loop of the pgRNA. Because deletion of the RNase H region renders the protein partly chaperone-independent, the chaperones may be needed indirectly to relieve occlusion of the RNA-binding site by this domain. Inhibited by several reverse-transcriptase inhibitors: Lamivudine, Adefovir and Entecavir. In terms of biological role, multifunctional enzyme that converts the viral RNA genome into dsDNA in viral cytoplasmic capsids. This enzyme displays a DNA polymerase activity that can copy either DNA or RNA templates, and a ribonuclease H (RNase H) activity that cleaves the RNA strand of RNA-DNA heteroduplexes in a partially processive 3'- to 5'-endonucleasic mode. Neo-synthesized pregenomic RNA (pgRNA) are encapsidated together with the P protein, and reverse-transcribed inside the nucleocapsid. Initiation of reverse-transcription occurs first by binding the epsilon loop on the pgRNA genome, and is initiated by protein priming, thereby the 5'-end of (-)DNA is covalently linked to P protein. Partial (+)DNA is synthesized from the (-)DNA template and generates the relaxed circular DNA (RC-DNA) genome. After budding and infection, the RC-DNA migrates in the nucleus, and is converted into a plasmid-like covalently closed circular DNA (cccDNA). The activity of P protein does not seem to be necessary for cccDNA generation, and is presumably released from (+)DNA by host nuclear DNA repair machinery. In Marmota monax (Woodchuck), this protein is Protein P.